Here is a 96-residue protein sequence, read N- to C-terminus: UPF0235 protein YggU (96 aa).

It belongs to the UPF0235 family.

The protein is UPF0235 protein YggU of Salmonella typhi.